Reading from the N-terminus, the 291-residue chain is Secretory carrier-associated membrane protein 5 (291 aa).

Residues 1–10 (MGGRYDRNTF) show a composition bias toward basic and acidic residues. Positions 1-66 (MGGRYDRNTF…GSGAQDLKKK (66 aa)) are disordered. Residues 1–126 (MGGRYDRNTF…EILVRLQRLQ (126 aa)) lie on the Cytoplasmic side of the membrane. Ser34 carries the phosphoserine modification. Residues 58-94 (SGAQDLKKKEKELQAKEADLRRREQDLKRKQDAAARA) are a coiled coil. Helical transmembrane passes span 127 to 147 (YIAFATYLGLVLALFWNIIAV), 159 to 179 (IWLLAVIYFISGVPGGYVLWY), 194 to 214 (FGWFFLFYMLHILFCLFAAVA), and 242 to 262 (IFYFIGFGLFCLESVVSIWVI). At 263 to 288 (QQVYMYFRGSGKADDMRRDAARGAMR) the chain is on the cytoplasmic side.

This sequence belongs to the SCAMP family.

The protein localises to the cell membrane. It localises to the cytoplasmic vesicle. The protein resides in the secretory vesicle membrane. Its function is as follows. Probably involved in membrane trafficking. This is Secretory carrier-associated membrane protein 5 (SCAMP5) from Arabidopsis thaliana (Mouse-ear cress).